Here is a 307-residue protein sequence, read N- to C-terminus: Reaction center protein M chain (307 aa).

Transmembrane regions (helical) follow at residues 52–78, 110–139, and 142–167; these read LGIA…WYQA, QGGV…ADQL, and GKHM…PILM. His181 and His201 together coordinate (7R,8Z)-bacteriochlorophyll b. The chain crosses the membrane as a helical span at residues 197–225; sequence YNPFHGLSIAALYGSALLFAMHGATILAV. Fe cation contacts are provided by His218 and Glu233. Trp251 is an a ubiquinone binding site. The chain crosses the membrane as a helical span at residues 259-285; that stretch reads ATMEGIHRWAIWMAVMVTLTGGIGILL. His265 serves as a coordination point for Fe cation.

Belongs to the reaction center PufL/M/PsbA/D family. As to quaternary structure, reaction center is composed of four bacteriochlorophylls, two bacteriopheophytins, two ubiquinones, one iron, and three highly hydrophobic polypeptide chains (designated L, M, and H).

It localises to the cellular chromatophore membrane. Functionally, the reaction center is a membrane-bound complex that mediates the initial photochemical event in the electron transfer process of photosynthesis. The polypeptide is Reaction center protein M chain (pufM) (Rhodobacter capsulatus (Rhodopseudomonas capsulata)).